A 348-amino-acid polypeptide reads, in one-letter code: Isopentenyl-diphosphate delta-isomerase (348 aa).

A substrate-binding site is contributed by 14-15; that stretch reads RK. Residues Ser72, 73-75, Ser103, and Asn131 each bind FMN; that span reads SMT. Residue 103–105 participates in substrate binding; that stretch reads SQR. A substrate-binding site is contributed by Gln166. A Mg(2+)-binding site is contributed by Glu167. Residues Lys198, Thr228, 278–280, and 299–300 each bind FMN; these read GIR and AR.

Belongs to the IPP isomerase type 2 family. In terms of assembly, homooctamer. Dimer of tetramers. Requires FMN as cofactor. The cofactor is NADPH. Mg(2+) is required as a cofactor.

The protein localises to the cytoplasm. The enzyme catalyses isopentenyl diphosphate = dimethylallyl diphosphate. Its function is as follows. Involved in the biosynthesis of isoprenoids. Catalyzes the 1,3-allylic rearrangement of the homoallylic substrate isopentenyl (IPP) to its allylic isomer, dimethylallyl diphosphate (DMAPP). The chain is Isopentenyl-diphosphate delta-isomerase from Synechococcus sp. (strain ATCC 27144 / PCC 6301 / SAUG 1402/1) (Anacystis nidulans).